The sequence spans 487 residues: Glutamate--tRNA ligase (487 aa).

Positions Pro12 to Asn22 match the 'HIGH' region motif. Residues Lys249–Arg253 carry the 'KMSKS' region motif. Residue Lys252 coordinates ATP.

It belongs to the class-I aminoacyl-tRNA synthetase family. Glutamate--tRNA ligase type 1 subfamily. As to quaternary structure, monomer.

The protein resides in the cytoplasm. The catalysed reaction is tRNA(Glu) + L-glutamate + ATP = L-glutamyl-tRNA(Glu) + AMP + diphosphate. Functionally, catalyzes the attachment of glutamate to tRNA(Glu) in a two-step reaction: glutamate is first activated by ATP to form Glu-AMP and then transferred to the acceptor end of tRNA(Glu). The chain is Glutamate--tRNA ligase from Clostridium novyi (strain NT).